The following is a 263-amino-acid chain: Leucyl/phenylalanyl-tRNA--protein transferase (263 aa).

This sequence belongs to the L/F-transferase family.

Its subcellular location is the cytoplasm. It catalyses the reaction N-terminal L-lysyl-[protein] + L-leucyl-tRNA(Leu) = N-terminal L-leucyl-L-lysyl-[protein] + tRNA(Leu) + H(+). The enzyme catalyses N-terminal L-arginyl-[protein] + L-leucyl-tRNA(Leu) = N-terminal L-leucyl-L-arginyl-[protein] + tRNA(Leu) + H(+). The catalysed reaction is L-phenylalanyl-tRNA(Phe) + an N-terminal L-alpha-aminoacyl-[protein] = an N-terminal L-phenylalanyl-L-alpha-aminoacyl-[protein] + tRNA(Phe). Its function is as follows. Functions in the N-end rule pathway of protein degradation where it conjugates Leu, Phe and, less efficiently, Met from aminoacyl-tRNAs to the N-termini of proteins containing an N-terminal arginine or lysine. This is Leucyl/phenylalanyl-tRNA--protein transferase from Novosphingobium aromaticivorans (strain ATCC 700278 / DSM 12444 / CCUG 56034 / CIP 105152 / NBRC 16084 / F199).